The chain runs to 482 residues: uncharacterized protein (482 aa).

WD repeat units lie at residues 92–133 and 191–230; these read DMPN…REPI and GHEH…CLCK.

It localises to the cytoplasm. It is found in the nucleus. This is an uncharacterized protein from Schizosaccharomyces pombe (strain 972 / ATCC 24843) (Fission yeast).